Reading from the N-terminus, the 621-residue chain is MKNANLSFKGQIPFNEEFDDIYFNTEKPWLESEFVFTSALDEIWQSKDSFIVAETGFGAGLNFFTLCKKFKNSSKKLHFVSIEKSPIKKEDLLKIYENLGIFKAYVKKLVSLYPPLISGIHRINFAPNITLDLCYGEADQILPELDFAADIWFLDGFAPSKNGSIWSEDVFKQIARLSRVGTIARTYSCAKIVKVGLKNAGFLLSLKEGYARKRQMSSAVLEKKDENLKDAWFARCEPVGSVNGKTALVIGTGVAGLATAGELAKNGFKVVIAEAKSEVATNGSGNHCGALMPLVTKPGVNLGRMHINAFLQAVRFYKANLPKSLIKFNGCIDYAFDDELVKRYSSWQDQSAEDLFKFNESLKPYPGIFIKEAAYARPREICKFLSSNFEILFNHEYESRAHLQNGKISVKFKNKKSLETDILVFCTGSKSSEIFKDYDMQISSVRGQVTHLKPVLKNELPLSAKGYICPAVKGVQVIGATYARNEICDTPKDEDNAKNLSDVSEFFDTTKAAIIGSRVGYRSYSGDRFPIIGALHDEEFYKQNYKGLFWSKNKDNNPKASYEKNVFVNFAHGSRGLGTAILGANLITDLVLARPLCIERSLFFELHPARFLIRKLKKGLK.

Positions 1–222 are tRNA (mnm(5)s(2)U34)-methyltransferase; it reads MKNANLSFKG…KRQMSSAVLE (222 aa). The FAD-dependent cmnm(5)s(2)U34 oxidoreductase stretch occupies residues 250–621; it reads IGTGVAGLAT…LIRKLKKGLK (372 aa).

The protein in the N-terminal section; belongs to the methyltransferase superfamily. tRNA (mnm(5)s(2)U34)-methyltransferase family. It in the C-terminal section; belongs to the DAO family. It depends on FAD as a cofactor.

The protein resides in the cytoplasm. The catalysed reaction is 5-aminomethyl-2-thiouridine(34) in tRNA + S-adenosyl-L-methionine = 5-methylaminomethyl-2-thiouridine(34) in tRNA + S-adenosyl-L-homocysteine + H(+). In terms of biological role, catalyzes the last two steps in the biosynthesis of 5-methylaminomethyl-2-thiouridine (mnm(5)s(2)U) at the wobble position (U34) in tRNA. Catalyzes the FAD-dependent demodification of cmnm(5)s(2)U34 to nm(5)s(2)U34, followed by the transfer of a methyl group from S-adenosyl-L-methionine to nm(5)s(2)U34, to form mnm(5)s(2)U34. This chain is tRNA 5-methylaminomethyl-2-thiouridine biosynthesis bifunctional protein MnmC, found in Campylobacter concisus (strain 13826).